Reading from the N-terminus, the 296-residue chain is Fructose-bisphosphate aldolase class 1 (296 aa).

Catalysis depends on Glu-175, which acts as the Proton acceptor. The Schiff-base intermediate with dihydroxyacetone-P role is filled by Lys-212.

Belongs to the class I fructose-bisphosphate aldolase family.

It catalyses the reaction beta-D-fructose 1,6-bisphosphate = D-glyceraldehyde 3-phosphate + dihydroxyacetone phosphate. The protein operates within carbohydrate degradation; glycolysis; D-glyceraldehyde 3-phosphate and glycerone phosphate from D-glucose: step 4/4. This is Fructose-bisphosphate aldolase class 1 from Staphylococcus epidermidis (strain ATCC 35984 / DSM 28319 / BCRC 17069 / CCUG 31568 / BM 3577 / RP62A).